The sequence spans 411 residues: MTFIEEFINKGYFHQCTDLERLTSITKESKIAAYIGFDCTATSLHIGSLMQIMILRLLQKHGHKPIVIIGGGTSKIGDPSGKDEARKTITKEDIARNAEGIKKSLSKFIKFGDGESDAIMLDNAEWLDSLYYLDFLRDFGSHFSVNRMLTMDSVKLRLEREQHLSFLEFNYMLLQAYDFYYLSKHYNCSLQLGGSDQWGNIVMGADLTRKISSKEVFGMTTPLLTTASGAKMGKTAAGAVWLNEDLLSPYDYYQYWRNCEDADIVRFAKLYSELTNEELVVFENLAAEDINAAKKQLAYELTKLCHGKQEAKNALETSVKIFEQGQIDENLTTIVLEPEMLQAGITAFELFHEAGLATSKSEARKLIRGKGAKVNDQLIEDENMVINTTFLLDNKVIKLSAGKKRHILVKI.

Position 34 (Y34) interacts with L-tyrosine. A 'HIGH' region motif is present at residues 39-48 (CTATSLHIGS). Residues Y171 and Q175 each coordinate L-tyrosine. A 'KMSKS' region motif is present at residues 231–235 (KMGKT). ATP is bound at residue K234. The region spanning 345-411 (ITAFELFHEA…GKKRHILVKI (67 aa)) is the S4 RNA-binding domain.

This sequence belongs to the class-I aminoacyl-tRNA synthetase family. TyrS type 1 subfamily. In terms of assembly, homodimer.

The protein localises to the cytoplasm. It carries out the reaction tRNA(Tyr) + L-tyrosine + ATP = L-tyrosyl-tRNA(Tyr) + AMP + diphosphate + H(+). Catalyzes the attachment of tyrosine to tRNA(Tyr) in a two-step reaction: tyrosine is first activated by ATP to form Tyr-AMP and then transferred to the acceptor end of tRNA(Tyr). This Rickettsia bellii (strain RML369-C) protein is Tyrosine--tRNA ligase.